Reading from the N-terminus, the 330-residue chain is Diacylglycerol kinase (330 aa).

A DAGKc domain is found at M1 to Y132. Residues N10 to G14, T41, G67 to E73, and T94 each bind ATP. Positions 213, 216, and 218 each coordinate Mg(2+). E273 serves as the catalytic Proton acceptor.

The protein belongs to the diacylglycerol/lipid kinase family. Homodimer. Mg(2+) serves as cofactor.

The enzyme catalyses a 1,2-diacyl-sn-glycerol + ATP = a 1,2-diacyl-sn-glycero-3-phosphate + ADP + H(+). In terms of biological role, catalyzes the phosphorylation of diacylglycerol (DAG) into phosphatidic acid. Is a key enzyme involved in the production of lipoteichoic acid by reintroducing DAG formed from the breakdown of membrane phospholipids into the phosphatidylglycerol biosynthetic pathway. This is Diacylglycerol kinase (dagK) from Staphylococcus haemolyticus (strain JCSC1435).